The primary structure comprises 178 residues: Actin-related protein 2/3 complex subunit 3-B (178 aa).

This sequence belongs to the ARPC3 family. In terms of assembly, component of the Arp2/3 complex composed of actr2/arp2, actr3/arp3, arpc1 (arpc1a or arpc1b), arpc2, arpc3, arpc4 and arpc5.

It is found in the cytoplasm. Its subcellular location is the cytoskeleton. The protein localises to the cell projection. It localises to the nucleus. Component of the Arp2/3 complex, a multiprotein complex that mediates actin polymerization upon stimulation by nucleation-promoting factor (NPF). The Arp2/3 complex mediates the formation of branched actin networks in the cytoplasm, providing the force for cell motility. In addition to its role in the cytoplasmic cytoskeleton, the Arp2/3 complex also promotes actin polymerization in the nucleus, thereby regulating gene transcription and repair of damaged DNA. The Arp2/3 complex promotes homologous recombination (HR) repair in response to DNA damage by promoting nuclear actin polymerization, leading to drive motility of double-strand breaks (DSBs). This chain is Actin-related protein 2/3 complex subunit 3-B (arpc3-b), found in Xenopus laevis (African clawed frog).